The chain runs to 138 residues: MMELQYNGQGYSKRFSRELVALMCAGAVSGIDWRRSSRRRLRVRDARVFSRLQRCSERYFWPDGTRFWCHARKRRRSPSLPARRPPTPREDALEDYAKEYGYDREDGEIYDREDGEIYDREDGEITPVYTRLKSLVVK.

The tract at residues 74–96 (RRRSPSLPARRPPTPREDALEDY) is disordered. Positions 87 to 96 (TPREDALEDY) are enriched in basic and acidic residues.

This is an uncharacterized protein from Orgyia pseudotsugata (Douglas-fir tussock moth).